Consider the following 150-residue polypeptide: Large ribosomal subunit protein bL9 (150 aa).

The protein belongs to the bacterial ribosomal protein bL9 family.

Functionally, binds to the 23S rRNA. In Cupriavidus metallidurans (strain ATCC 43123 / DSM 2839 / NBRC 102507 / CH34) (Ralstonia metallidurans), this protein is Large ribosomal subunit protein bL9.